The primary structure comprises 194 residues: ATP-dependent Clp protease proteolytic subunit (194 aa).

Ser98 acts as the Nucleophile in catalysis. His123 is a catalytic residue.

The protein belongs to the peptidase S14 family. Fourteen ClpP subunits assemble into 2 heptameric rings which stack back to back to give a disk-like structure with a central cavity, resembling the structure of eukaryotic proteasomes.

Its subcellular location is the cytoplasm. The enzyme catalyses Hydrolysis of proteins to small peptides in the presence of ATP and magnesium. alpha-casein is the usual test substrate. In the absence of ATP, only oligopeptides shorter than five residues are hydrolyzed (such as succinyl-Leu-Tyr-|-NHMec, and Leu-Tyr-Leu-|-Tyr-Trp, in which cleavage of the -Tyr-|-Leu- and -Tyr-|-Trp bonds also occurs).. Its function is as follows. Cleaves peptides in various proteins in a process that requires ATP hydrolysis. Has a chymotrypsin-like activity. Plays a major role in the degradation of misfolded proteins. The polypeptide is ATP-dependent Clp protease proteolytic subunit (Clostridium tetani (strain Massachusetts / E88)).